Here is a 587-residue protein sequence, read N- to C-terminus: ATP-dependent zinc metalloprotease FtsH 2 (587 aa).

The Cytoplasmic segment spans residues 1-12 (MSSDRTREVTKR). Residues 13-33 (ILMVLFGLWLLQFFFLPPLTT) traverse the membrane as a helical segment. Residues 34 to 102 (RPTELSYSAF…EQRYEVTRTP (69 aa)) lie on the Extracellular side of the membrane. Residues 103–123 (WWVTLLPTVLWLAVMVGLFAW) traverse the membrane as a helical segment. At 124–587 (AQKRQAGAFG…GDDVRRILSA (464 aa)) the chain is on the cytoplasmic side. 192-199 (GPPGTGKT) is an ATP binding site. Residue H416 participates in Zn(2+) binding. The active site involves E417. Positions 420 and 492 each coordinate Zn(2+).

This sequence in the central section; belongs to the AAA ATPase family. The protein in the C-terminal section; belongs to the peptidase M41 family. In terms of assembly, homohexamer. Requires Zn(2+) as cofactor.

The protein localises to the cell membrane. Acts as a processive, ATP-dependent zinc metallopeptidase for both cytoplasmic and membrane proteins. Plays a role in the quality control of integral membrane proteins. The polypeptide is ATP-dependent zinc metalloprotease FtsH 2 (Symbiobacterium thermophilum (strain DSM 24528 / JCM 14929 / IAM 14863 / T)).